Reading from the N-terminus, the 119-residue chain is Ribonuclease P protein component (119 aa).

This sequence belongs to the RnpA family. In terms of assembly, consists of a catalytic RNA component (M1 or rnpB) and a protein subunit.

It carries out the reaction Endonucleolytic cleavage of RNA, removing 5'-extranucleotides from tRNA precursor.. In terms of biological role, RNaseP catalyzes the removal of the 5'-leader sequence from pre-tRNA to produce the mature 5'-terminus. It can also cleave other RNA substrates such as 4.5S RNA. The protein component plays an auxiliary but essential role in vivo by binding to the 5'-leader sequence and broadening the substrate specificity of the ribozyme. This is Ribonuclease P protein component from Pectobacterium atrosepticum (strain SCRI 1043 / ATCC BAA-672) (Erwinia carotovora subsp. atroseptica).